Here is a 230-residue protein sequence, read N- to C-terminus: uncharacterized protein (230 aa).

This is an uncharacterized protein from Sinorhizobium fredii (strain NBRC 101917 / NGR234).